Here is a 190-residue protein sequence, read N- to C-terminus: Potassium-transporting ATPase KdpC subunit (190 aa).

The chain crosses the membrane as a helical span at residues 13 to 33 (IGFLLLTLVCGVLYPGVVTVF).

This sequence belongs to the KdpC family. As to quaternary structure, the system is composed of three essential subunits: KdpA, KdpB and KdpC.

The protein localises to the cell membrane. Part of the high-affinity ATP-driven potassium transport (or Kdp) system, which catalyzes the hydrolysis of ATP coupled with the electrogenic transport of potassium into the cytoplasm. This subunit acts as a catalytic chaperone that increases the ATP-binding affinity of the ATP-hydrolyzing subunit KdpB by the formation of a transient KdpB/KdpC/ATP ternary complex. This is Potassium-transporting ATPase KdpC subunit from Listeria monocytogenes serovar 1/2a (strain ATCC BAA-679 / EGD-e).